We begin with the raw amino-acid sequence, 551 residues long: Glucans biosynthesis protein D (551 aa).

Positions 1–32 (MNRRRFIKGSMAMAAVCGSSGIASLFSQAAFA) form a signal peptide, tat-type signal.

It belongs to the OpgD/OpgG family. In terms of processing, predicted to be exported by the Tat system. The position of the signal peptide cleavage has not been experimentally proven.

The protein resides in the periplasm. Its pathway is glycan metabolism; osmoregulated periplasmic glucan (OPG) biosynthesis. Its function is as follows. Probably involved in the control of the structural glucose backbone of osmoregulated periplasmic glucans (OPGs). This is Glucans biosynthesis protein D from Salmonella enteritidis PT4 (strain P125109).